The chain runs to 365 residues: Peptide chain release factor 1 (365 aa).

Q240 carries the N5-methylglutamine modification.

Belongs to the prokaryotic/mitochondrial release factor family. In terms of processing, methylated by PrmC. Methylation increases the termination efficiency of RF1.

It is found in the cytoplasm. Its function is as follows. Peptide chain release factor 1 directs the termination of translation in response to the peptide chain termination codons UAG and UAA. In Bifidobacterium animalis subsp. lactis (strain AD011), this protein is Peptide chain release factor 1.